Consider the following 423-residue polypeptide: tRNA-dihydrouridine(16/17) synthase [NAD(P)(+)] (423 aa).

Position 2 is an N-acetylthreonine (Thr2). Residues 35–37 (PMV) and Gln92 contribute to the FMN site. The Proton donor role is filled by Cys121. FMN is bound by residues Lys160, His188, 223 to 225 (NGN), and 247 to 248 (AE). The disordered stretch occupies residues 404–423 (KKRKADVPLESADKKKDVKA). A compositionally biased stretch (basic and acidic residues) spans 408-423 (ADVPLESADKKKDVKA).

It belongs to the Dus family. Dus1 subfamily. In terms of assembly, monomer. It depends on FMN as a cofactor.

It carries out the reaction 5,6-dihydrouridine(16) in tRNA + NADP(+) = uridine(16) in tRNA + NADPH + H(+). The catalysed reaction is 5,6-dihydrouridine(16) in tRNA + NAD(+) = uridine(16) in tRNA + NADH + H(+). The enzyme catalyses 5,6-dihydrouridine(17) in tRNA + NAD(+) = uridine(17) in tRNA + NADH + H(+). It catalyses the reaction 5,6-dihydrouridine(17) in tRNA + NADP(+) = uridine(17) in tRNA + NADPH + H(+). It carries out the reaction a 5,6-dihydrouridine in mRNA + NAD(+) = a uridine in mRNA + NADH + H(+). The catalysed reaction is a 5,6-dihydrouridine in mRNA + NADP(+) = a uridine in mRNA + NADPH + H(+). Functionally, catalyzes the synthesis of dihydrouridine, a modified base found in the D-loop of most tRNAs. Specifically modifies U16 and U17 in cytoplasmic tRNAs. Also able to mediate dihydrouridylation of some mRNAs, thereby affecting their translation. This Saccharomyces cerevisiae (strain ATCC 204508 / S288c) (Baker's yeast) protein is tRNA-dihydrouridine(16/17) synthase [NAD(P)(+)].